Consider the following 95-residue polypeptide: Suppressor of silencing 2b (95 aa).

Positions 8–18 (LHEIIRKLERM) are homotetramerization. Residues 8–40 (LHEIIRKLERMNQKKQAQRKRHKLNRKERGHKS) adopt a coiled-coil conformation. Positions 16–49 (ERMNQKKQAQRKRHKLNRKERGHKSPSEQRRSEL) are disordered. Residues 23-37 (QAQRKRHKLNRKERG) are compositionally biased toward basic residues. Residues 26 to 30 (RKRHK) carry the Nuclear localization signal motif. Basic and acidic residues predominate over residues 38–49 (HKSPSEQRRSEL).

This sequence belongs to the cucumovirus/ilarvirus protein 2b family. Homodimer. Homotetramer (dimer of dimers).

Its subcellular location is the host nucleus. Its function is as follows. Acts as a suppressor of RNA-mediated gene silencing, also known as post-transcriptional gene silencing (PTGS), a mechanism of plant viral defense that limits the accumulation of viral RNAs. Forms a homodimer to measure siRNA duplex in a length-preference mode. Binds to both siRNA duplexes (19bp) and long siRNA duplexes (30bp). In Canna (Florist's daisy), this protein is Suppressor of silencing 2b.